Here is a 102-residue protein sequence, read N- to C-terminus: Small ribosomal subunit protein uS10 (102 aa).

Positions 34–58 (LSGPVPLPTKTLEIPARKSPDGEGT) are disordered.

This sequence belongs to the universal ribosomal protein uS10 family. As to quaternary structure, part of the 30S ribosomal subunit.

In terms of biological role, involved in the binding of tRNA to the ribosomes. In Natronomonas pharaonis (strain ATCC 35678 / DSM 2160 / CIP 103997 / JCM 8858 / NBRC 14720 / NCIMB 2260 / Gabara) (Halobacterium pharaonis), this protein is Small ribosomal subunit protein uS10.